The primary structure comprises 574 residues: Eukaryotic translation initiation factor 3 subunit D (574 aa).

The segment at 153–178 is disordered; that stretch reads QRRGGNARQGQRGQGGRFGGDRPKER. A compositionally biased stretch (low complexity) spans 154–163; that stretch reads RRGGNARQGQ. The tract at residues 312–326 is RNA gate; it reads PVETLTVSETSAEPP. Positions 555–574 are disordered; that stretch reads EGTFDSERESSEEENSDDDQ. Acidic residues predominate over residues 564 to 574; sequence SSEEENSDDDQ.

This sequence belongs to the eIF-3 subunit D family. As to quaternary structure, component of the eukaryotic translation initiation factor 3 (eIF-3) complex.

The protein resides in the cytoplasm. MRNA cap-binding component of the eukaryotic translation initiation factor 3 (eIF-3) complex, which is involved in protein synthesis of a specialized repertoire of mRNAs and, together with other initiation factors, stimulates binding of mRNA and methionyl-tRNAi to the 40S ribosome. The eIF-3 complex specifically targets and initiates translation of a subset of mRNAs involved in cell proliferation. In the eIF-3 complex, eif3d specifically recognizes and binds the 7-methylguanosine cap of a subset of mRNAs. This is Eukaryotic translation initiation factor 3 subunit D from Caenorhabditis briggsae.